The following is a 417-amino-acid chain: Equilibrative nucleotide transporter 7 (417 aa).

11 helical membrane-spanning segments follow: residues 19-39, 54-74, 84-104, 110-130, 143-163, 184-204, 264-284, 293-315, 326-346, 353-373, and 392-412; these read LVCCFLGVGSLVAWNAMLTIT, VLTIVYQLVANVFIITLATKE, IFGYSLYTAGTFCLIILDLAS, VVAYVLLCLIVALFGLADAFV, PDFIQAFMAGLGIAGALTSVL, LFIGIATLIELACVFLYTLVF, LGINLSLIYVVTLSIFPGFLY, GDWYAPVLVAMYNGWDAISRFIP, KWITVCVVARLLLVPAFYFTA, WMLFLTSFLGLSNGYLTVCIF, and MCVFLLGGIFAGVCLGWLWLI.

Belongs to the SLC29A/ENT transporter (TC 2.A.57) family. In terms of tissue distribution, expressed in leaves and flowers.

It localises to the cell membrane. In terms of biological role, nucleoside transporter that can mediate uptake of adenosine, uridine, guanosine or cytidine when expressed in a heterologous system (yeast). In Arabidopsis thaliana (Mouse-ear cress), this protein is Equilibrative nucleotide transporter 7 (ENT7).